Consider the following 335-residue polypeptide: BTB and MATH domain-containing protein 39 (335 aa).

The MATH domain maps to 14 to 141; that stretch reads MKTLCFKIMN…NGVFTIEFDL (128 aa). The BTB domain occupies 161 to 226; sequence ADGKLIVEDQ…LQLDEFKVNV (66 aa).

The protein is BTB and MATH domain-containing protein 39 of Caenorhabditis briggsae.